A 193-amino-acid chain; its full sequence is Ion-translocating oxidoreductase complex subunit A (193 aa).

6 consecutive transmembrane segments (helical) span residues 5 to 25, 39 to 59, 63 to 83, 102 to 122, 134 to 154, and 171 to 191; these read LLLL…FLGL, VGMG…SYLM, ILIP…VIAV, LLGI…VALL, IIYG…FAAM, and SIAM…TGLI.

It belongs to the NqrDE/RnfAE family. In terms of assembly, the complex is composed of six subunits: RnfA, RnfB, RnfC, RnfD, RnfE and RnfG.

It localises to the cell inner membrane. Its function is as follows. Part of a membrane-bound complex that couples electron transfer with translocation of ions across the membrane. The protein is Ion-translocating oxidoreductase complex subunit A of Aeromonas salmonicida (strain A449).